We begin with the raw amino-acid sequence, 208 residues long: Uracil phosphoribosyltransferase (208 aa).

5-phospho-alpha-D-ribose 1-diphosphate is bound by residues R78, R103, and 130–138 (DPMLATGGS). Uracil is bound by residues I193 and 198 to 200 (GDA). 5-phospho-alpha-D-ribose 1-diphosphate is bound at residue D199.

Belongs to the UPRTase family. The cofactor is Mg(2+).

The enzyme catalyses UMP + diphosphate = 5-phospho-alpha-D-ribose 1-diphosphate + uracil. It participates in pyrimidine metabolism; UMP biosynthesis via salvage pathway; UMP from uracil: step 1/1. Its activity is regulated as follows. Allosterically activated by GTP. In terms of biological role, catalyzes the conversion of uracil and 5-phospho-alpha-D-ribose 1-diphosphate (PRPP) to UMP and diphosphate. In Pectobacterium carotovorum subsp. carotovorum (strain PC1), this protein is Uracil phosphoribosyltransferase.